Here is a 170-residue protein sequence, read N- to C-terminus: Peptide deformylase 2 (170 aa).

Fe cation contacts are provided by Cys-94 and His-136. Glu-137 is an active-site residue. Fe cation is bound at residue His-140.

It belongs to the polypeptide deformylase family. Fe(2+) is required as a cofactor.

The catalysed reaction is N-terminal N-formyl-L-methionyl-[peptide] + H2O = N-terminal L-methionyl-[peptide] + formate. Removes the formyl group from the N-terminal Met of newly synthesized proteins. Requires at least a dipeptide for an efficient rate of reaction. N-terminal L-methionine is a prerequisite for activity but the enzyme has broad specificity at other positions. The polypeptide is Peptide deformylase 2 (Xanthomonas axonopodis pv. citri (strain 306)).